A 690-amino-acid chain; its full sequence is SWI/SNF-related matrix-associated actin-dependent regulator of chromatin subfamily A-like protein 1 homolog (690 aa).

A disordered region spans residues 30 to 49; that stretch reads MQAAANATASTSSAAPPAPP. Low complexity predominate over residues 31-44; that stretch reads QAAANATASTSSAA. The HARP domain occupies 92-170; sequence PTSLIKPTIG…AVKVELEPLP (79 aa). Residues 209–367 enclose the Helicase ATP-binding domain; it reads IFALERDGRI…FTQIRLIDHK (159 aa). 222–229 contacts ATP; the sequence is DEMGLGKS. The short motif at 316-319 is the DESH box element; it reads DESH. A Nuclear localization signal motif is present at residues 411-428; that stretch reads RRLKADVLKDLPEKRREV. A Helicase C-terminal domain is found at 482–639; that stretch reads ILENYFYPDA…TFRTADKMHL (158 aa).

It belongs to the SNF2/RAD54 helicase family. SMARCAL1 subfamily.

The protein resides in the nucleus. It catalyses the reaction ATP + H2O = ADP + phosphate + H(+). ATP-dependent annealing helicase that catalyzes the rewinding of the stably unwound DNA. The protein is SWI/SNF-related matrix-associated actin-dependent regulator of chromatin subfamily A-like protein 1 homolog of Caenorhabditis elegans.